Here is a 113-residue protein sequence, read N- to C-terminus: UPF0342 protein SEQ_0993 (113 aa).

The protein belongs to the UPF0342 family.

This chain is UPF0342 protein SEQ_0993, found in Streptococcus equi subsp. equi (strain 4047).